A 920-amino-acid polypeptide reads, in one-letter code: Isoleucine--tRNA ligase (920 aa).

The short motif at 57 to 67 (PYANGDIHLGH) is the 'HIGH' region element. E560 contacts L-isoleucyl-5'-AMP. The 'KMSKS' region signature appears at 601-605 (KMSKS). K604 serves as a coordination point for ATP. The Zn(2+) site is built by C890, C893, C910, and C913.

It belongs to the class-I aminoacyl-tRNA synthetase family. IleS type 1 subfamily. In terms of assembly, monomer. Requires Zn(2+) as cofactor.

It is found in the cytoplasm. It catalyses the reaction tRNA(Ile) + L-isoleucine + ATP = L-isoleucyl-tRNA(Ile) + AMP + diphosphate. In terms of biological role, catalyzes the attachment of isoleucine to tRNA(Ile). As IleRS can inadvertently accommodate and process structurally similar amino acids such as valine, to avoid such errors it has two additional distinct tRNA(Ile)-dependent editing activities. One activity is designated as 'pretransfer' editing and involves the hydrolysis of activated Val-AMP. The other activity is designated 'posttransfer' editing and involves deacylation of mischarged Val-tRNA(Ile). The sequence is that of Isoleucine--tRNA ligase from Caldicellulosiruptor bescii (strain ATCC BAA-1888 / DSM 6725 / KCTC 15123 / Z-1320) (Anaerocellum thermophilum).